We begin with the raw amino-acid sequence, 389 residues long: Methylthioribose-1-phosphate isomerase (389 aa).

The active-site Proton donor is the Asp258.

The protein belongs to the eIF-2B alpha/beta/delta subunits family. MtnA subfamily.

It localises to the cytoplasm. The protein resides in the nucleus. The enzyme catalyses 5-(methylsulfanyl)-alpha-D-ribose 1-phosphate = 5-(methylsulfanyl)-D-ribulose 1-phosphate. Its pathway is amino-acid biosynthesis; L-methionine biosynthesis via salvage pathway; L-methionine from S-methyl-5-thio-alpha-D-ribose 1-phosphate: step 1/6. Functionally, catalyzes the interconversion of methylthioribose-1-phosphate (MTR-1-P) into methylthioribulose-1-phosphate (MTRu-1-P). The chain is Methylthioribose-1-phosphate isomerase from Chaetomium globosum (strain ATCC 6205 / CBS 148.51 / DSM 1962 / NBRC 6347 / NRRL 1970) (Soil fungus).